Here is a 141-residue protein sequence, read N- to C-terminus: Nucleoside diphosphate kinase (141 aa).

ATP contacts are provided by Lys-11, Phe-59, Arg-87, Thr-93, Arg-104, and Asn-114. His-117 (pros-phosphohistidine intermediate) is an active-site residue.

The protein belongs to the NDK family. In terms of assembly, homotetramer. Requires Mg(2+) as cofactor.

It localises to the cytoplasm. The enzyme catalyses a 2'-deoxyribonucleoside 5'-diphosphate + ATP = a 2'-deoxyribonucleoside 5'-triphosphate + ADP. It catalyses the reaction a ribonucleoside 5'-diphosphate + ATP = a ribonucleoside 5'-triphosphate + ADP. Functionally, major role in the synthesis of nucleoside triphosphates other than ATP. The ATP gamma phosphate is transferred to the NDP beta phosphate via a ping-pong mechanism, using a phosphorylated active-site intermediate. The polypeptide is Nucleoside diphosphate kinase (Cellvibrio japonicus (strain Ueda107) (Pseudomonas fluorescens subsp. cellulosa)).